The primary structure comprises 751 residues: E3 ubiquitin-protein ligase SMURF2 (751 aa).

Residues 1–119 enclose the C2 domain; that stretch reads MSNQGSRRNG…TGYQRLDLCK (119 aa). Residues 157–190 enclose the WW 1 domain; the sequence is NDLPDGWEERRTASGRIQYLNHITRTTQWERPTR. A compositionally biased stretch (polar residues) spans 214 to 226; that stretch reads GTNGASCGQTSDP. Positions 214–236 are disordered; that stretch reads GTNGASCGQTSDPRISERRVRSQ. WW domains lie at 251–284 and 297–330; these read PDLP…DPRV and GPLP…DPRL. Positions 417 to 751 constitute an HECT domain; the sequence is RPKDLWKRLM…IEETCGFAVE (335 aa). The Glycyl thioester intermediate role is filled by cysteine 719.

The protein localises to the nucleus. The protein resides in the cytoplasm. It localises to the cell membrane. It is found in the membrane raft. It catalyses the reaction S-ubiquitinyl-[E2 ubiquitin-conjugating enzyme]-L-cysteine + [acceptor protein]-L-lysine = [E2 ubiquitin-conjugating enzyme]-L-cysteine + N(6)-ubiquitinyl-[acceptor protein]-L-lysine.. Its pathway is protein modification; protein ubiquitination. In terms of biological role, E3 ubiquitin-protein ligase which accepts ubiquitin from an E2 ubiquitin-conjugating enzyme in the form of a thioester and then directly transfers the ubiquitin to targeted substrates. In Xenopus laevis (African clawed frog), this protein is E3 ubiquitin-protein ligase SMURF2 (smurf2).